The primary structure comprises 440 residues: SET domain-containing protein 4 (440 aa).

The span at Met-1–Leu-16 shows a compositional bias: basic residues. The tract at residues Met-1–Gly-24 is disordered. An SET domain is found at Ser-48 to Gly-273. Residue Tyr-272 participates in S-adenosyl-L-methionine binding.

It belongs to the class V-like SAM-binding methyltransferase superfamily. SETD4 family. Forms a ternary complex with TBK1 and ZNF268; the interaction with TBK1 is ZNF268-dependent and leads to TBK1 monomethylation.

The protein resides in the cytoplasm. The protein localises to the cytosol. It localises to the nucleus. The enzyme catalyses L-lysyl(4)-[histone H3] + S-adenosyl-L-methionine = N(6)-methyl-L-lysyl(4)-[histone H3] + S-adenosyl-L-homocysteine + H(+). It carries out the reaction N(6)-methyl-L-lysyl(4)-[histone H3] + S-adenosyl-L-methionine = N(6),N(6)-dimethyl-L-lysyl(4)-[histone H3] + S-adenosyl-L-homocysteine + H(+). The catalysed reaction is L-lysyl(20)-[histone H4] + S-adenosyl-L-methionine = N(6)-methyl-L-lysyl(20)-[histone H4] + S-adenosyl-L-homocysteine + H(+). It catalyses the reaction N(6)-methyl-L-lysyl(20)-[histone H4] + S-adenosyl-L-methionine = N(6),N(6)-dimethyl-L-lysyl(20)-[histone H4] + S-adenosyl-L-homocysteine + H(+). The enzyme catalyses N(6),N(6)-dimethyl-L-lysyl(20)-[histone H4] + S-adenosyl-L-methionine = N(6),N(6),N(6)-trimethyl-L-lysyl(20)-[histone H4] + S-adenosyl-L-homocysteine + H(+). It carries out the reaction L-lysyl-[protein] + S-adenosyl-L-methionine = N(6)-methyl-L-lysyl-[protein] + S-adenosyl-L-homocysteine + H(+). Protein-lysine N-methyltransferase that methylates both histones and non-histone proteins. Via its catalytic activity, regulates many processes, including cell proliferation, cell differentiation, inflammatory response and apoptosis. Regulates the inflammatory response by mediating mono- and dimethylation of 'Lys-4' of histone H3 (H3K4me1 and H3K4me2, respectively), leading to activate the transcription of pro-inflammatory cytokines IL6 and TNF-alpha. Through the catalysis of TBK1 monomethylation, may regulate virus-induced interferon signaling. TBK1 monomethylation enhances its interaction with MAVS, STING and IRF3, hence promoting antiviral interferon signaling. Also involved in the regulation of stem cell quiescence by catalyzing the trimethylation of 'Lys-20' of histone H4 (H4K20me3), thereby promoting heterochromatin formation. In the brain, epigenetically controls quiescence of neural stem cells for sustaining a protected neural stem cell population and maintaining a stem cell reservoir for neurogenesis. Involved in proliferation, migration, paracrine and myogenic differentiation of bone marrow mesenchymal stem cells (BMSCs). Through the catalysis of XRCC5/Ku70 trimethylation, regulates BAX-mediated apoptosis. SETD4-catalyzed XRCC5 methylation results in XRCC5 translocation to the cytoplasm, where it interacts with BAX, sequestering it from the mitochondria, hence preventing BAX-mediated apoptosis. This chain is SET domain-containing protein 4, found in Homo sapiens (Human).